Here is a 131-residue protein sequence, read N- to C-terminus: MPTTQQLLRKGRKVLQKKSKVPALKGSPFRRGVCTVVKTTTPKKPNSALRKIARVRLSSGFEVTAYIPGEGHNLQEHSVVLIRGGRVKDLPGVRYHIVRGSLDTQGVKDRNKSRSKYGTKKPKAGAAAAKK.

Residues 1–22 form a disordered region; it reads MPTTQQLLRKGRKVLQKKSKVP. The span at 9–20 shows a compositional bias: basic residues; the sequence is RKGRKVLQKKSK. A 3-methylthioaspartic acid modification is found at D89. A disordered region spans residues 102–131; it reads LDTQGVKDRNKSRSKYGTKKPKAGAAAAKK. The span at 113-131 shows a compositional bias: basic residues; sequence SRSKYGTKKPKAGAAAAKK.

The protein belongs to the universal ribosomal protein uS12 family. As to quaternary structure, part of the 30S ribosomal subunit. Contacts proteins S8 and S17. May interact with IF1 in the 30S initiation complex.

In terms of biological role, with S4 and S5 plays an important role in translational accuracy. Functionally, interacts with and stabilizes bases of the 16S rRNA that are involved in tRNA selection in the A site and with the mRNA backbone. Located at the interface of the 30S and 50S subunits, it traverses the body of the 30S subunit contacting proteins on the other side and probably holding the rRNA structure together. The combined cluster of proteins S8, S12 and S17 appears to hold together the shoulder and platform of the 30S subunit. This chain is Small ribosomal subunit protein uS12, found in Deinococcus radiodurans (strain ATCC 13939 / DSM 20539 / JCM 16871 / CCUG 27074 / LMG 4051 / NBRC 15346 / NCIMB 9279 / VKM B-1422 / R1).